A 502-amino-acid chain; its full sequence is Glycerol kinase (502 aa).

ADP is bound at residue Thr-14. Thr-14, Thr-15, and Ser-16 together coordinate ATP. Thr-14 serves as a coordination point for sn-glycerol 3-phosphate. Arg-18 provides a ligand contact to ADP. 4 residues coordinate sn-glycerol 3-phosphate: Arg-84, Glu-85, Tyr-136, and Asp-246. Arg-84, Glu-85, Tyr-136, Asp-246, and Gln-247 together coordinate glycerol. The ADP site is built by Thr-268 and Gly-311. Residues Thr-268, Gly-311, Gln-315, and Gly-412 each coordinate ATP. ADP-binding residues include Gly-412 and Asn-416.

Belongs to the FGGY kinase family. As to quaternary structure, homotetramer and homodimer (in equilibrium). Heterodimer with EIIA-Glc. Binds 1 zinc ion per glycerol kinase EIIA-Glc dimer. The zinc ion is important for dimerization.

The enzyme catalyses glycerol + ATP = sn-glycerol 3-phosphate + ADP + H(+). Its pathway is polyol metabolism; glycerol degradation via glycerol kinase pathway; sn-glycerol 3-phosphate from glycerol: step 1/1. Activity of this regulatory enzyme is affected by several metabolites. Allosterically and non-competitively inhibited by fructose 1,6-bisphosphate (FBP) and unphosphorylated phosphocarrier protein EIIA-Glc (III-Glc), an integral component of the bacterial phosphotransferase (PTS) system. Functionally, key enzyme in the regulation of glycerol uptake and metabolism. Catalyzes the phosphorylation of glycerol to yield sn-glycerol 3-phosphate. This is Glycerol kinase from Salmonella heidelberg (strain SL476).